We begin with the raw amino-acid sequence, 112 residues long: Low molecular weight protein antigen 6 (112 aa).

The protein resides in the secreted. The polypeptide is Low molecular weight protein antigen 6 (cfp6) (Mycobacterium bovis (strain ATCC BAA-935 / AF2122/97)).